Reading from the N-terminus, the 416-residue chain is Glutamyl-tRNA reductase (416 aa).

Substrate-binding positions include 49–52 (TCNR), serine 105, 110–112 (EPQ), and glutamine 116. The Nucleophile role is filled by cysteine 50. NADP(+) is bound at residue 185–190 (GAGETI).

It belongs to the glutamyl-tRNA reductase family. In terms of assembly, homodimer.

It carries out the reaction (S)-4-amino-5-oxopentanoate + tRNA(Glu) + NADP(+) = L-glutamyl-tRNA(Glu) + NADPH + H(+). It functions in the pathway porphyrin-containing compound metabolism; protoporphyrin-IX biosynthesis; 5-aminolevulinate from L-glutamyl-tRNA(Glu): step 1/2. In terms of biological role, catalyzes the NADPH-dependent reduction of glutamyl-tRNA(Glu) to glutamate 1-semialdehyde (GSA). The sequence is that of Glutamyl-tRNA reductase from Shewanella putrefaciens (strain CN-32 / ATCC BAA-453).